Here is a 115-residue protein sequence, read N- to C-terminus: Large ribosomal subunit protein bL19 (115 aa).

It belongs to the bacterial ribosomal protein bL19 family.

Functionally, this protein is located at the 30S-50S ribosomal subunit interface and may play a role in the structure and function of the aminoacyl-tRNA binding site. The sequence is that of Large ribosomal subunit protein bL19 from Brevibacillus brevis (strain 47 / JCM 6285 / NBRC 100599).